We begin with the raw amino-acid sequence, 255 residues long: RNA polymerase sigma-F factor (255 aa).

Residues aspartate 61 to valine 74 carry the Polymerase core binding motif. Positions glutamine 221–lysine 240 form a DNA-binding region, H-T-H motif.

The protein belongs to the sigma-70 factor family.

Its function is as follows. Sigma factors are initiation factors that promote the attachment of RNA polymerase to specific initiation sites and are then released. This sigma factor is responsible for the expression of sporulation specific genes. The polypeptide is RNA polymerase sigma-F factor (sigF) (Bacillus licheniformis).